The following is a 214-amino-acid chain: Adenylate kinase (214 aa).

An ATP-binding site is contributed by 10–15; sequence GAGKGT. Residues 30 to 59 are NMP; the sequence is STGDIFRANIKGNTPLGQKAKEYMDKGELV. Residues Thr31, Arg36, 57–59, 85–88, and Gln92 each bind AMP; these read ELV and GFPR. The interval 126 to 163 is LID; the sequence is GRRVCTNCGATYNVVFNPTKVEGICDVCNSPVIQRADD. Arg127 is an ATP binding site. Cys130 and Cys133 together coordinate Zn(2+). 136–137 serves as a coordination point for ATP; it reads TY. Zn(2+)-binding residues include Cys150 and Cys153. Residues Arg160 and Arg171 each coordinate AMP. Position 199 (Gly199) interacts with ATP.

Belongs to the adenylate kinase family. In terms of assembly, monomer.

It localises to the cytoplasm. It catalyses the reaction AMP + ATP = 2 ADP. Its pathway is purine metabolism; AMP biosynthesis via salvage pathway; AMP from ADP: step 1/1. Its function is as follows. Catalyzes the reversible transfer of the terminal phosphate group between ATP and AMP. Plays an important role in cellular energy homeostasis and in adenine nucleotide metabolism. This chain is Adenylate kinase, found in Ruminiclostridium cellulolyticum (strain ATCC 35319 / DSM 5812 / JCM 6584 / H10) (Clostridium cellulolyticum).